A 161-amino-acid polypeptide reads, in one-letter code: UPF0262 protein SPOA0072 (161 aa).

The tract at residues 1–21 (MTMSRISHIELDDSNLPPPTP) is disordered.

The protein belongs to the UPF0262 family.

In Ruegeria pomeroyi (strain ATCC 700808 / DSM 15171 / DSS-3) (Silicibacter pomeroyi), this protein is UPF0262 protein SPOA0072.